The following is a 191-amino-acid chain: ATP synthase subunit b 2 (191 aa).

Over residues 1 to 12 (MAESHGEAKGGE) the composition is skewed to basic and acidic residues. The interval 1-31 (MAESHGEAKGGEAKGTASAHTEAEGGHGFPP) is disordered. The chain crosses the membrane as a helical span at residues 38–60 (PSQIASLVIAFVALYVIVSRVAL).

It belongs to the ATPase B chain family. In terms of assembly, F-type ATPases have 2 components, F(1) - the catalytic core - and F(0) - the membrane proton channel. F(1) has five subunits: alpha(3), beta(3), gamma(1), delta(1), epsilon(1). F(0) has three main subunits: a(1), b(2) and c(10-14). The alpha and beta chains form an alternating ring which encloses part of the gamma chain. F(1) is attached to F(0) by a central stalk formed by the gamma and epsilon chains, while a peripheral stalk is formed by the delta and b chains.

Its subcellular location is the cell inner membrane. F(1)F(0) ATP synthase produces ATP from ADP in the presence of a proton or sodium gradient. F-type ATPases consist of two structural domains, F(1) containing the extramembraneous catalytic core and F(0) containing the membrane proton channel, linked together by a central stalk and a peripheral stalk. During catalysis, ATP synthesis in the catalytic domain of F(1) is coupled via a rotary mechanism of the central stalk subunits to proton translocation. Its function is as follows. Component of the F(0) channel, it forms part of the peripheral stalk, linking F(1) to F(0). The b'-subunit is a diverged and duplicated form of b found in plants and photosynthetic bacteria. The polypeptide is ATP synthase subunit b 2 (atpF2) (Bradyrhizobium sp. (strain ORS 278)).